The sequence spans 207 residues: Putative 3-methyladenine DNA glycosylase (207 aa).

This sequence belongs to the DNA glycosylase MPG family.

The polypeptide is Putative 3-methyladenine DNA glycosylase (Listeria monocytogenes serovar 1/2a (strain ATCC BAA-679 / EGD-e)).